We begin with the raw amino-acid sequence, 451 residues long: Tol-Pal system protein TolB 1 (451 aa).

Residues 1 to 19 (MTLRMLFAFALLAAAPAQA) form the signal peptide. A compositionally biased stretch (low complexity) spans 18 to 29 (QAQQTEPQPAEE). Disordered stretches follow at residues 18 to 37 (QAQQTEPQPAEEGGLSGTVS) and 431 to 451 (NERRLSTPGDASDPAWGPLLP).

The protein belongs to the TolB family. As to quaternary structure, the Tol-Pal system is composed of five core proteins: the inner membrane proteins TolA, TolQ and TolR, the periplasmic protein TolB and the outer membrane protein Pal. They form a network linking the inner and outer membranes and the peptidoglycan layer.

Its subcellular location is the periplasm. Its function is as follows. Part of the Tol-Pal system, which plays a role in outer membrane invagination during cell division and is important for maintaining outer membrane integrity. This is Tol-Pal system protein TolB 1 from Novosphingobium aromaticivorans (strain ATCC 700278 / DSM 12444 / CCUG 56034 / CIP 105152 / NBRC 16084 / F199).